Consider the following 557-residue polypeptide: Arginine--tRNA ligase (557 aa).

The short motif at 128 to 138 (ANPTGPLHVGH) is the 'HIGH' region element.

The protein belongs to the class-I aminoacyl-tRNA synthetase family. As to quaternary structure, monomer.

Its subcellular location is the cytoplasm. The catalysed reaction is tRNA(Arg) + L-arginine + ATP = L-arginyl-tRNA(Arg) + AMP + diphosphate. This is Arginine--tRNA ligase from Thiobacillus denitrificans (strain ATCC 25259 / T1).